We begin with the raw amino-acid sequence, 195 residues long: MYVAIEGVDTCGKSTQIQLLKAYYPQAVFTKEPGGSIIGEHIRDLVLFAPKKYGFTLDERAELMLFLADRAQHYAQVLLPHKDKLIISDRSVISGIAYAKSIDIAQSIALNDFVLRGMLPDLVVILELDEKSLKERIESKSHDNIESRGISYMLEIQKCFKNVVTQMNLKYIVLDATQDKERICAQIREHINILV.

An ATP-binding site is contributed by 7 to 14; sequence GVDTCGKS.

It belongs to the thymidylate kinase family.

It catalyses the reaction dTMP + ATP = dTDP + ADP. Its function is as follows. Phosphorylation of dTMP to form dTDP in both de novo and salvage pathways of dTTP synthesis. The protein is Thymidylate kinase of Helicobacter hepaticus (strain ATCC 51449 / 3B1).